Consider the following 262-residue polypeptide: RNA-binding protein 7 (262 aa).

The residue at position 2 (G2) is an N-acetylglycine. The RRM domain occupies 10–87 (RTLFVGNLET…RPIKIQFRAG (78 aa)). ZCCHC8 binding stretches follow at residues 25-35 (LLFELFHQAGP) and 59-76 (HEVS…IKLF). A disordered region spans residues 95-121 (VSLSYPQHHVGNSSPTSTSPSRTVDNM). S133 and S134 each carry phosphoserine. R149 is subject to Omega-N-methylarginine. 2 disordered regions span residues 159 to 212 (SPHL…HYSR) and 242 to 262 (SHDY…SSRH). Polar residues predominate over residues 165 to 194 (SGFSPSAQSHNHTFNQSSSSQWRQDTPSSQ). At S201 the chain carries Phosphoserine. Residues 242–253 (SHDYDNRRDSGR) are compositionally biased toward basic and acidic residues.

In terms of assembly, component of the nuclear exosome targeting (NEXT) complex composed of MTREX, ZCCHC8, and RBM7 that directs a subset of non-coding short-lived RNAs for exosomal degradation. Interacts with ZCCHC8 and SF3B2/SAP145. Binds to MTREX through ZCCHC8. Interacts with YWHAE and YWHAZ; these interactions are stress-dependent and RBM7 phosphorylation dependent; release RNA from the NEXT complex and may affect RNA targeting to the nuclear RNA exosomome for degradation. Interacts with MEPCE and LARP7, the core subunits of 7SK snRNP; upon genotoxic stress this interaction is enhanced, triggering the release of inactive P-TEFb complex from the core and P-TEFb complex activation. In terms of processing, phosphorylated at Ser-133 by MAPK14/p38-alpha-activated MAPKAPK2/MK2; this phosphorylation is stress-dependent; this phosphorylation decreases its RNA-binding capacity therefore affecting RNA nuclear exosome-mediated degradation. This phosphorylation mediates YWHAE and YWHAZ interactions.

It is found in the nucleus. The protein resides in the nucleoplasm. Functionally, RNA-binding subunit of the trimeric nuclear exosome targeting (NEXT) complex, a complex that functions as an RNA exosome cofactor that directs a subset of non-coding short-lived RNAs for exosomal degradation. NEXT is involved in surveillance and turnover of aberrant transcripts and non-coding RNAs. Binds preferentially polyuridine sequences and associates with newly synthesized RNAs, including pre-mRNAs and short-lived exosome substrates such as promoter upstream transcripts (PROMPTs), enhancer RNAs (eRNAs), and 3'-extended products from small nuclear RNAs (snRNAs). Participates in several biological processes including DNA damage response (DDR) and stress response. During stress response, activation of the p38MAPK-MK2 pathway decreases RBM7-RNA-binding and subsequently the RNA exosome degradation activities, thereby modulating the turnover of non-coding transcriptome. Participates in DNA damage response (DDR), through its interaction with MEPCE and LARP7, the core subunits of 7SK snRNP complex, that release the positive transcription elongation factor b (P-TEFb) complex from the 7SK snRNP. In turn, activation of P-TEFb complex induces the transcription of P-TEFb-dependent DDR genes to promote cell viability. In Bos taurus (Bovine), this protein is RNA-binding protein 7.